We begin with the raw amino-acid sequence, 333 residues long: PDZ domain-containing protein GIPC1 (333 aa).

The segment covering M1 to A11 has biased composition (basic residues). The disordered stretch occupies residues M1–R55. A compositionally biased stretch (gly residues) spans L27–A40. S68 carries the phosphoserine modification. The PDZ domain occupies E133 to E213. Residues I221 to R244 are disordered. Phosphoserine occurs at positions 222, 225, and 232. Positions G228–R240 are enriched in gly residues. T242 bears the Phosphothreonine mark. Phosphoserine is present on S247.

The protein belongs to the GIPC family. Interacts with SDC4/syndecan-4 and SEMA4C/semaphorin-4C. Interacts with RGS19 (C-terminus), GLUT1 (C-terminus), ACTN1, KIF1B, MYO6 and PLEKHG5. Widely expressed.

The protein localises to the cytoplasm. The protein resides in the membrane. Functionally, may be involved in G protein-linked signaling. This is PDZ domain-containing protein GIPC1 (Gipc1) from Rattus norvegicus (Rat).